The following is a 228-amino-acid chain: Interferon-induced transmembrane protein 10 (228 aa).

At 1–154 (MREGKRGPPC…PDTTEVNDYY (154 aa)) the chain is on the extracellular side. The interval 29–49 (AQGPGQCPAPLGDPASTTDGA) is disordered. The helical transmembrane segment at 155-175 (LWSIFNFVYLNFCCLGFIALA) threads the bilayer. 2 S-palmitoyl cysteine lipidation sites follow: cysteine 167 and cysteine 168. At 176–200 (YSLKVRDKKLLNDLNGAVEDAKTAR) the chain is on the cytoplasmic side. The chain crosses the membrane as a helical span at residues 201–221 (LFNITSSALAASCIILVFIFL). At 222-228 (RYPLTDY) the chain is on the extracellular side.

Belongs to the CD225/Dispanin family.

It localises to the cell membrane. The polypeptide is Interferon-induced transmembrane protein 10 (IFITM10) (Homo sapiens (Human)).